The chain runs to 940 residues: Pentatricopeptide repeat-containing protein At5g14770, mitochondrial (940 aa).

The N-terminal 24 residues, methionine 1–phenylalanine 24, are a transit peptide targeting the mitochondrion. 24 PPR repeats span residues tyrosine 59 to proline 93, aspartate 94 to proline 129, aspartate 130 to isoleucine 161, aspartate 162 to proline 196, aspartate 197 to threonine 231, asparagine 241 to proline 259, aspartate 260 to proline 294, asparagine 295 to valine 329, aspartate 330 to proline 364, asparagine 365 to proline 399, asparagine 400 to proline 434, asparagine 435 to glutamate 469, asparagine 470 to leucine 504, aspartate 505 to tryptophan 539, aspartate 540 to proline 573, aspartate 574 to proline 608, serine 609 to proline 643, asparagine 644 to leucine 678, serine 679 to proline 713, aspartate 714 to proline 748, asparagine 749 to proline 783, aspartate 784 to proline 818, lysine 819 to proline 853, and asparagine 854 to lysine 891.

The protein belongs to the PPR family. P subfamily.

It localises to the mitochondrion. The protein is Pentatricopeptide repeat-containing protein At5g14770, mitochondrial of Arabidopsis thaliana (Mouse-ear cress).